A 250-amino-acid chain; its full sequence is MRMRLFPAIDLKEGKAVRLLQGRMEDATVYGEQPVEVARKFKEQGADSLHVVDLDGAFAGKPVNDAVILKLIQSSGLRVQVGGGIRTLERIEELLKLGVERVILGTVAVRNPELVEKAVQRFEEAVVIGIDAKDGLVAVQGWAEKTEIKALDLALRMKKVGVKHLVFTDISRDGMLQGPNIQSTVELARLSGLQVVASGGVSRLEDLRLLQEEANRGVSLEGAIVGKALYAGAFSLAEALRVVGQRSEGK.

Residue aspartate 10 is the Proton acceptor of the active site. Aspartate 131 (proton donor) is an active-site residue.

Belongs to the HisA/HisF family.

It localises to the cytoplasm. The catalysed reaction is 1-(5-phospho-beta-D-ribosyl)-5-[(5-phospho-beta-D-ribosylamino)methylideneamino]imidazole-4-carboxamide = 5-[(5-phospho-1-deoxy-D-ribulos-1-ylimino)methylamino]-1-(5-phospho-beta-D-ribosyl)imidazole-4-carboxamide. The protein operates within amino-acid biosynthesis; L-histidine biosynthesis; L-histidine from 5-phospho-alpha-D-ribose 1-diphosphate: step 4/9. This is 1-(5-phosphoribosyl)-5-[(5-phosphoribosylamino)methylideneamino] imidazole-4-carboxamide isomerase from Desulfitobacterium hafniense (strain DSM 10664 / DCB-2).